A 331-amino-acid chain; its full sequence is Retinol dehydrogenase 13 (331 aa).

Serine 2 carries the post-translational modification N-acetylserine. 45 to 51 (GANTGIG) serves as a coordination point for NADP(+). Residue serine 174 coordinates substrate. The active-site Proton acceptor is tyrosine 200. Serine 323 is subject to Phosphoserine.

Belongs to the short-chain dehydrogenases/reductases (SDR) family. In terms of tissue distribution, widely expressed. In the retina, detected in the inner segment of the photoreceptor cells. Weak signals are observed in a small population of inner nuclear neurons and the inner plexiform layer.

It is found in the mitochondrion inner membrane. It catalyses the reaction all-trans-retinol + NADP(+) = all-trans-retinal + NADPH + H(+). It participates in cofactor metabolism; retinol metabolism. Functionally, retinol dehydrogenase with a clear preference for NADP. Oxidizes all-trans-retinol, but seems to reduce all-trans-retinal with much higher efficiency. Has no activity toward steroids. The chain is Retinol dehydrogenase 13 (RDH13) from Homo sapiens (Human).